The chain runs to 234 residues: Small ribosomal subunit protein uS3 (234 aa).

Residues 17–86 (VEKFLTKELK…SPQVEVQQVQ (70 aa)) form the KH type-2 domain.

Belongs to the universal ribosomal protein uS3 family. In terms of assembly, part of the 30S ribosomal subunit.

Binds the lower part of the 30S subunit head. The chain is Small ribosomal subunit protein uS3 from Methanoculleus marisnigri (strain ATCC 35101 / DSM 1498 / JR1).